A 270-amino-acid polypeptide reads, in one-letter code: MIKWLWKANKPQAEMLAQWHEALNIPLLAPLNEPEQQRLVSVASQLLQQKRFIPLQGLILTPLMQARLALLFALPVMELGAKWLDGFHEVLIYPSPFIVAEDWQDDLGLVHSGQSVQSGQSWEQGPIVLNWQDIQDSFDLSGFNLVIHEAAHKLDMRNGGHSNGVPPIAMRDVAVWEHDLHHAMDNIQDEIDMVGVEGASMDAYAASNPAECFAVLSEYFFSAPELLEGRFPAVYQHFCRFYRQDPLARLKRWENSLADNPPPENTHSHR.

The Zn(2+) site is built by H111, H148, H152, and E211.

The protein belongs to the MtfA family. As to quaternary structure, interacts with Mlc. The cofactor is Zn(2+).

The protein localises to the cytoplasm. In terms of biological role, involved in the modulation of the activity of the glucose-phosphotransferase system (glucose-PTS). Interacts with the transcriptional repressor Mlc, preventing its interaction with DNA and leading to the modulation of expression of genes regulated by Mlc, including ptsG, which encodes the PTS system glucose-specific EIICB component. Its function is as follows. Shows zinc-dependent metallopeptidase activity. This is Mlc titration factor A from Yersinia pestis bv. Antiqua (strain Nepal516).